Here is a 241-residue protein sequence, read N- to C-terminus: Probable transcriptional regulatory protein LMOf2365_1554 (241 aa).

The segment covering 1–14 (MSGHSKWNNIQGRK) has biased composition (polar residues). Residues 1 to 22 (MSGHSKWNNIQGRKNAQDSKRS) form a disordered region.

It belongs to the TACO1 family.

Its subcellular location is the cytoplasm. The sequence is that of Probable transcriptional regulatory protein LMOf2365_1554 from Listeria monocytogenes serotype 4b (strain F2365).